Reading from the N-terminus, the 244-residue chain is Phosphoadenosine 5'-phosphosulfate reductase (244 aa).

The active-site Nucleophile; cysteine thiosulfonate intermediate is the Cys-239.

Belongs to the PAPS reductase family. CysH subfamily.

It is found in the cytoplasm. It catalyses the reaction [thioredoxin]-disulfide + sulfite + adenosine 3',5'-bisphosphate + 2 H(+) = [thioredoxin]-dithiol + 3'-phosphoadenylyl sulfate. It functions in the pathway sulfur metabolism; hydrogen sulfide biosynthesis; sulfite from sulfate: step 3/3. Catalyzes the formation of sulfite from phosphoadenosine 5'-phosphosulfate (PAPS) using thioredoxin as an electron donor. This chain is Phosphoadenosine 5'-phosphosulfate reductase, found in Zymomonas mobilis subsp. mobilis (strain ATCC 31821 / ZM4 / CP4).